We begin with the raw amino-acid sequence, 192 residues long: Large ribosomal subunit protein bL25 (192 aa).

Belongs to the bacterial ribosomal protein bL25 family. CTC subfamily. Part of the 50S ribosomal subunit; part of the 5S rRNA/L5/L18/L25 subcomplex. Contacts the 5S rRNA. Binds to the 5S rRNA independently of L5 and L18.

This is one of the proteins that binds to the 5S RNA in the ribosome where it forms part of the central protuberance. The protein is Large ribosomal subunit protein bL25 of Porphyromonas gingivalis (strain ATCC 33277 / DSM 20709 / CIP 103683 / JCM 12257 / NCTC 11834 / 2561).